The sequence spans 283 residues: Acetylglutamate kinase (283 aa).

Residues 64-65 (GG), Arg-86, and Asn-179 contribute to the substrate site.

Belongs to the acetylglutamate kinase family. ArgB subfamily.

It localises to the cytoplasm. It catalyses the reaction N-acetyl-L-glutamate + ATP = N-acetyl-L-glutamyl 5-phosphate + ADP. It functions in the pathway amino-acid biosynthesis; L-arginine biosynthesis; N(2)-acetyl-L-ornithine from L-glutamate: step 2/4. Catalyzes the ATP-dependent phosphorylation of N-acetyl-L-glutamate. The chain is Acetylglutamate kinase from Campylobacter hominis (strain ATCC BAA-381 / DSM 21671 / CCUG 45161 / LMG 19568 / NCTC 13146 / CH001A).